The primary structure comprises 256 residues: Protein FixA (256 aa).

This sequence belongs to the ETF beta-subunit/FixA family. In terms of assembly, heterodimer of FixA and FixB.

Its pathway is amine and polyamine metabolism; carnitine metabolism. Required for anaerobic carnitine reduction. May bring reductant to CaiA. In Escherichia fergusonii (strain ATCC 35469 / DSM 13698 / CCUG 18766 / IAM 14443 / JCM 21226 / LMG 7866 / NBRC 102419 / NCTC 12128 / CDC 0568-73), this protein is Protein FixA.